Consider the following 597-residue polypeptide: DNA import protein CedB (597 aa).

The helical transmembrane segment at 10–30 (VVLLILGIISFNLVFIILAII) threads the bilayer. 286–293 (GPTGSGKT) provides a ligand contact to ATP.

It is found in the cell membrane. In terms of biological role, part of the Ced system, which is involved in DNA import. In Sulfolobus acidocaldarius (strain ATCC 33909 / DSM 639 / JCM 8929 / NBRC 15157 / NCIMB 11770), this protein is DNA import protein CedB.